The sequence spans 325 residues: Probable isoaspartyl peptidase/L-asparaginase 2 (325 aa).

Threonine 195 functions as the Nucleophile in the catalytic mechanism. Substrate is bound by residues 223-226 (RIGD) and 245-248 (TGEG).

It belongs to the Ntn-hydrolase family. As to quaternary structure, heterotetramer of two alpha and two beta chains arranged as a dimer of alpha/beta heterodimers. Post-translationally, cleaved into an alpha and beta chain by autocatalysis; this activates the enzyme. The N-terminal residue of the beta subunit is responsible for the nucleophile hydrolase activity.

The enzyme catalyses Cleavage of a beta-linked Asp residue from the N-terminus of a polypeptide.. Acts in asparagine catabolism and also in the final steps of protein degradation via hydrolysis of a range of isoaspartyl dipeptides. This Arabidopsis thaliana (Mouse-ear cress) protein is Probable isoaspartyl peptidase/L-asparaginase 2.